A 1287-amino-acid chain; its full sequence is MEIQQTHRKINRPLVSLALVGALVSITPQQSHAAFFTTVIIPAIVGGIATGTAVGTVSGLLGWGLKQAEEANKTPDKPDKVWRIQAGKGFNEFPNKEYDLYKSLLSSKIDGGWDWGNAATHYWIKGGQWNKLEVDMKDAVGTYKLSGLRNFTGGDLDVNMQKATLRLGQFNGNSFTSYKDSADRTTRVDFNAKNILIDNFLEINNRVGSGAGRKASSTVLTLQASEGITSSKNAEISLYDGATLNLASNSVKLNGNVWMGRLQYVGAYLAPSYSTINTSKVTGEVNFNHLTVGDHNAAQAGIIASNKTHIGTLDLWQSAGLNIIAPPEGGYKDKPNNTPSQSGAKNDKQESSQNNSNTQVINPPNSTQKTEVQPTQVIDGPFAGGKDTVVNIDRINTKADGTIKVGGFKASLTTNAAHLNIGKGGVNLSNQASGRTLLVENLTGNITVDGPLRVNNQVGGYALAGSSANFEFKAGVDTKNGTATFNNDISLGRFVNLKVDAHTANFKGIDTGNGGFNTLDFSGVTNKVNINKLITASTNVAVKNFNINELIVKTNGVSVGEYTHFSEDIGSQSRINTVRLETGTRSIFSGGVKFKSGEKLVIDEFYYSPWNYFDARNIKNVEITRKFASSTPENPWGTSKLMFNNLTLGQNAVMDYSQFSNLTIQGDFINNQGTINYLVRGGKVATLNVGNAAAMMFNNDIDSATGFYKPLIKINSAQDLIKNTEHVLLKAKIIGYGNVSTGTNGISNVNLEEQFKERLALYNNNNRMDTCVVRNTDDIKACGMAIGNQSMVNNPDNYKYLIGKAWKNIGISKTANGSKISVYYLGNSTPTENGGNTTNLPTNTTNNARFASYALIKNAPFAHSATPNLVAINQHDFGTIESVFELANRSKDIDTLYANSGAQGRDLLQTLLIDSHDAGYARTMIDATSANEITKQLNTATTTLNNIASLEHKTSSLQTLSLSNAMILNSRLVNLSRRHTNNIDSFAKRLQALKDQRFASLESAAEVLYQFAPKYEKPTNVWANAIGGASLNNGGNASLYGTSAGVDAYLNGQVEAIVGGFGSYGYSSFNNQANSLNSGANNTNFGVYSRIFANQHEFDFEAQGALGSDQSSLNFKSALLRDLNQSYNYLAYSAATRASYGYDFAFFRNALVLKPSVGVSYNHLGSTNFKSNSTNKVALSNGSSSQHLFNASANVEARYYYGDTSYFYMNAGVLQEFANFGSSNAVSLNTFKVNATRNPLNTHARVMMGGELKLAKEVFLNLGVVYLHNLISNIGHFASNLGMRYSF.

An N-terminal signal peptide occupies residues 1–33 (MEIQQTHRKINRPLVSLALVGALVSITPQQSHA). A disordered region spans residues 326-381 (PPEGGYKDKPNNTPSQSGAKNDKQESSQNNSNTQVINPPNSTQKTEVQPTQVIDGP). A compositionally biased stretch (polar residues) spans 351–376 (SSQNNSNTQVINPPNSTQKTEVQPTQ). One can recognise an Autotransporter domain in the interval 1014 to 1287 (KYEKPTNVWA…ASNLGMRYSF (274 aa)).

The protein resides in the periplasm. Its subcellular location is the secreted. It is found in the cell surface. It localises to the cell outer membrane. Induces vacuolation of eukaryotic cells. Causes ulceration and gastric lesions. This chain is Vacuolating cytotoxin autotransporter (vacA), found in Helicobacter pylori (Campylobacter pylori).